Consider the following 78-residue polypeptide: MSDTAERVKKIVVEHLGVDADKVTEGASFIDDLGADSLDTVELVMAFEEEFGVEIPDDAAETILTVGDAVKFIDKASA.

Positions 2–77 constitute a Carrier domain; sequence SDTAERVKKI…DAVKFIDKAS (76 aa). Ser-37 carries the post-translational modification O-(pantetheine 4'-phosphoryl)serine.

The protein belongs to the acyl carrier protein (ACP) family. Post-translationally, 4'-phosphopantetheine is transferred from CoA to a specific serine of apo-ACP by AcpS. This modification is essential for activity because fatty acids are bound in thioester linkage to the sulfhydryl of the prosthetic group.

It localises to the cytoplasm. Its pathway is lipid metabolism; fatty acid biosynthesis. Functionally, carrier of the growing fatty acid chain in fatty acid biosynthesis. In Brucella abortus (strain S19), this protein is Acyl carrier protein.